The chain runs to 296 residues: Sulfotransferase 1C2 (296 aa).

Position 49–54 (49–54 (KAGTTW)) interacts with 3'-phosphoadenylyl sulfate. A substrate-binding site is contributed by 107–109 (KTH). H109 functions as the Proton acceptor in the catalytic mechanism. Residues R131, S139, Y194, and 228–233 (TSFEKM) each bind 3'-phosphoadenylyl sulfate. A Phosphoserine modification is found at S139. S254 bears the Phosphoserine mark. Residue 256–260 (FMRKG) coordinates 3'-phosphoadenylyl sulfate.

It belongs to the sulfotransferase 1 family. Found in adult stomach, kidney and thyroid gland, and in fetal kidney and liver.

It is found in the cytoplasm. The protein resides in the lysosome. Its subcellular location is the mitochondrion. The catalysed reaction is a phenol + 3'-phosphoadenylyl sulfate = an aryl sulfate + adenosine 3',5'-bisphosphate + H(+). It carries out the reaction cholesterol + 3'-phosphoadenylyl sulfate = cholesterol sulfate + adenosine 3',5'-bisphosphate + H(+). Its function is as follows. Sulfotransferase that utilizes 3'-phospho-5'-adenylyl sulfate (PAPS) to catalyze the sulfate conjugation of phenolic compounds. Does not transfer sulfate to steroids, dopamine, acetaminophen, or alpha-naphthol. Except in mitochondria, where it can add sulfate to cholesterol producing cholesterol sulfate, which alters mitochondrial membrane organization, and impacts protein complex mobility increasing state-III respiration, thereby modulating mitochondrial respiration. Catalyzes the sulfation of the carcinogenic N-hydroxy-2-acetylaminofluorene leading to highly reactive intermediates capable of forming DNA adducts, potentially resulting in mutagenesis. In Homo sapiens (Human), this protein is Sulfotransferase 1C2 (SULT1C2).